Reading from the N-terminus, the 484-residue chain is Probable cytochrome P450 316a1 (484 aa).

Residue cysteine 433 coordinates heme.

It belongs to the cytochrome P450 family. It depends on heme as a cofactor.

The protein resides in the endoplasmic reticulum membrane. It localises to the microsome membrane. Its function is as follows. May be involved in the metabolism of insect hormones and in the breakdown of synthetic insecticides. This is Probable cytochrome P450 316a1 (Cyp316a1) from Drosophila melanogaster (Fruit fly).